Reading from the N-terminus, the 548-residue chain is Flagellin (548 aa).

This sequence belongs to the bacterial flagellin family.

It localises to the secreted. Its subcellular location is the bacterial flagellum. In terms of biological role, flagellin is the subunit protein which polymerizes to form the filaments of bacterial flagella. In Escherichia coli O127:H6 (strain E2348/69 / EPEC), this protein is Flagellin (fliC).